A 509-amino-acid polypeptide reads, in one-letter code: Major envelope glycoprotein (509 aa).

A signal peptide spans M1–P17. 6 N-linked (GlcNAc...) asparagine; by host glycosylation sites follow: N34, N156, N194, N351, N381, and N423. A lipid anchor (O-palmitoyl serine; by host) is attached at S479. Residues F480–V502 traverse the membrane as a helical segment. N504 is a glycosylation site (N-linked (GlcNAc...) asparagine; by host).

The protein belongs to the baculoviridae gp64 family. Palmitoylated.

Its subcellular location is the virion membrane. It localises to the host cell membrane. Functionally, envelope phosphoglycoprotein which mediates the fusion of viral and host endosomal membranes leading to virus entry into the host cell. The chain is Major envelope glycoprotein (GP67) from Choristoneura fumiferana nuclear polyhedrosis virus (CfMNPV).